Consider the following 326-residue polypeptide: Large ribosomal subunit protein uL4 (326 aa).

The segment at 1 to 211 (MASCVVKNWQ…EKLKARWGSG (211 aa)) is large ribosomal subunit protein uL4. Disordered regions lie at residues 44-76 (ARQG…ARAG) and 211-326 (GAAA…EDND). The span at 60–71 (GGRKPWRQKGTG) shows a compositional bias: basic residues. Positions 212–326 (AAAAAPTQAD…TAAAEEEDND (115 aa)) are unknown. The segment covering 221–238 (DRLEDQAQAAEREARPVE) has biased composition (basic and acidic residues). Low complexity-rich tracts occupy residues 252 to 279 (EAQA…QVQE) and 294 to 312 (QGQA…PPAG). Over residues 313–326 (EEAETAAAEEEDND) the composition is skewed to acidic residues.

This sequence belongs to the universal ribosomal protein uL4 family. Part of the 50S ribosomal subunit.

Its function is as follows. One of the primary rRNA binding proteins, this protein initially binds near the 5'-end of the 23S rRNA. It is important during the early stages of 50S assembly. It makes multiple contacts with different domains of the 23S rRNA in the assembled 50S subunit and ribosome. In terms of biological role, forms part of the polypeptide exit tunnel. In Synechococcus sp. (strain JA-3-3Ab) (Cyanobacteria bacterium Yellowstone A-Prime), this protein is Large ribosomal subunit protein uL4.